The primary structure comprises 339 residues: DNA-directed RNA polymerase subunit alpha (339 aa).

Residues 1–233 (MVREEVAGST…DLFLPFLHAE (233 aa)) form an alpha N-terminal domain (alpha-NTD) region. Residues 264–339 (KKGIPLNCIF…IDLLKNKLSF (76 aa)) form an alpha C-terminal domain (alpha-CTD) region.

Belongs to the RNA polymerase alpha chain family. As to quaternary structure, in plastids the minimal PEP RNA polymerase catalytic core is composed of four subunits: alpha, beta, beta', and beta''. When a (nuclear-encoded) sigma factor is associated with the core the holoenzyme is formed, which can initiate transcription.

The protein localises to the plastid. The protein resides in the chloroplast. The catalysed reaction is RNA(n) + a ribonucleoside 5'-triphosphate = RNA(n+1) + diphosphate. Functionally, DNA-dependent RNA polymerase catalyzes the transcription of DNA into RNA using the four ribonucleoside triphosphates as substrates. The chain is DNA-directed RNA polymerase subunit alpha from Psathyrostachys stoloniformis.